The following is a 473-amino-acid chain: Pre-mRNA-splicing factor PRP46 (473 aa).

The segment covering 1 to 10 (MSTSLETPSG) has biased composition (polar residues). Disordered stretches follow at residues 1–21 (MSTS…VASG) and 103–126 (GPNV…QAVA). WD repeat units follow at residues 180–219 (GHMG…LKLS), 222–261 (GHIS…VIRH), 264–303 (GHFS…NIFT), 306–347 (GHTS…NTLT), 349–388 (HKKS…FVNN), 391–429 (GHEA…PFQH), and 440–473 (DAEA…SEQA).

The protein belongs to the WD repeat PRL1/PRL2 family. In terms of assembly, associated with the spliceosome.

It localises to the cytoplasm. It is found in the nucleus. Functionally, involved in pre-mRNA splicing and required for cell cycle progression at G2/M. This is Pre-mRNA-splicing factor PRP46 (PRP46) from Cryptococcus neoformans var. neoformans serotype D (strain JEC21 / ATCC MYA-565) (Filobasidiella neoformans).